Reading from the N-terminus, the 201-residue chain is MSKHIAGPEIERLIQLLARIPGLGPRSARRAALHLIKKKETLLEPLGAAIQAAVQKVCICSVCGNVDTIDPCSICTDPRRDDATIIVVEDIADLWALERAKTLAARYHVLGGKLSPLDGIGPDELNIAPLIQRVVQNPITEIILAVNATVEGQTTAHYITDQLSNFSVKVTRLAHGVPVGGELDYLDDGTLAAALQARTNL.

The C4-type zinc-finger motif lies at 60 to 75 (CSVCGNVDTIDPCSIC). The Toprim domain occupies 83-178 (ATIIVVEDIA…KVTRLAHGVP (96 aa)).

It belongs to the RecR family.

Its function is as follows. May play a role in DNA repair. It seems to be involved in an RecBC-independent recombinational process of DNA repair. It may act with RecF and RecO. This Bartonella henselae (strain ATCC 49882 / DSM 28221 / CCUG 30454 / Houston 1) (Rochalimaea henselae) protein is Recombination protein RecR.